A 296-amino-acid polypeptide reads, in one-letter code: N-acetylmuramic acid 6-phosphate etherase (296 aa).

In terms of domain architecture, SIS spans 54 to 217; the sequence is VIASFQQGGR…STTAMVGIGK (164 aa). Residue glutamate 82 is the Proton donor of the active site. Glutamate 113 is a catalytic residue.

It belongs to the GCKR-like family. MurNAc-6-P etherase subfamily. In terms of assembly, homodimer.

It catalyses the reaction N-acetyl-D-muramate 6-phosphate + H2O = N-acetyl-D-glucosamine 6-phosphate + (R)-lactate. The protein operates within amino-sugar metabolism; N-acetylmuramate degradation. Functionally, specifically catalyzes the cleavage of the D-lactyl ether substituent of MurNAc 6-phosphate, producing GlcNAc 6-phosphate and D-lactate. This Shouchella clausii (strain KSM-K16) (Alkalihalobacillus clausii) protein is N-acetylmuramic acid 6-phosphate etherase.